The chain runs to 181 residues: Shikimate kinase 2 (181 aa).

Residue 12–17 (GCGKTT) participates in ATP binding. Thr-16 and Asp-32 together coordinate Mg(2+). Asp-34, Arg-58, and Gly-79 together coordinate substrate. Residues 112 to 126 (EAEPEADLRPTLTGK) are LID domain. Residue Arg-120 coordinates ATP. Arg-139 provides a ligand contact to substrate.

The protein belongs to the shikimate kinase family. AroL subfamily. Monomer. The cofactor is Mg(2+).

It is found in the cytoplasm. It catalyses the reaction shikimate + ATP = 3-phosphoshikimate + ADP + H(+). The protein operates within metabolic intermediate biosynthesis; chorismate biosynthesis; chorismate from D-erythrose 4-phosphate and phosphoenolpyruvate: step 5/7. Its function is as follows. Catalyzes the specific phosphorylation of the 3-hydroxyl group of shikimic acid using ATP as a cosubstrate. The polypeptide is Shikimate kinase 2 (Salmonella enteritidis PT4 (strain P125109)).